The chain runs to 478 residues: Ribosomal RNA small subunit methyltransferase F (478 aa).

S-adenosyl-L-methionine is bound by residues 121–127 (ASAPGSK), Glu145, Asp172, and Asp190. Cys243 (nucleophile) is an active-site residue.

Belongs to the class I-like SAM-binding methyltransferase superfamily. RsmB/NOP family.

The protein resides in the cytoplasm. It carries out the reaction cytidine(1407) in 16S rRNA + S-adenosyl-L-methionine = 5-methylcytidine(1407) in 16S rRNA + S-adenosyl-L-homocysteine + H(+). Specifically methylates the cytosine at position 1407 (m5C1407) of 16S rRNA. The protein is Ribosomal RNA small subunit methyltransferase F of Shewanella sediminis (strain HAW-EB3).